Consider the following 242-residue polypeptide: DNA repair protein RecO (242 aa).

It belongs to the RecO family. As to quaternary structure, monomer.

Involved in DNA repair and RecF pathway recombination. The protein is DNA repair protein RecO of Shigella dysenteriae serotype 1 (strain Sd197).